The primary structure comprises 231 residues: Ion-translocating oxidoreductase complex subunit E (231 aa).

6 helical membrane passes run 18-38 (ALVQLLGLCPLLAVTSTATNA), 39-59 (LGLGLATTLVLTLTNLTISTL), 63-83 (TPAEIRIPIYVMIIASVVSAV), 86-106 (LINAYAFGLYQSLGIFIPLIV), 125-145 (ALSALDGFSIGMGATCAMFVL), and 182-202 (PFLLAMLPPGAFIGLGLMLAG).

It belongs to the NqrDE/RnfAE family. As to quaternary structure, the complex is composed of six subunits: RsxA, RsxB, RsxC, RsxD, RsxE and RsxG.

It localises to the cell inner membrane. Its function is as follows. Part of a membrane-bound complex that couples electron transfer with translocation of ions across the membrane. Required to maintain the reduced state of SoxR. This chain is Ion-translocating oxidoreductase complex subunit E, found in Escherichia coli O1:K1 / APEC.